Consider the following 155-residue polypeptide: Small ribosomal subunit protein uS7c (155 aa).

Belongs to the universal ribosomal protein uS7 family. As to quaternary structure, part of the 30S ribosomal subunit.

It is found in the plastid. The protein resides in the chloroplast. Its function is as follows. One of the primary rRNA binding proteins, it binds directly to 16S rRNA where it nucleates assembly of the head domain of the 30S subunit. The chain is Small ribosomal subunit protein uS7c (rps7) from Cornus mas (Cornelian cherry dogwood).